Here is a 116-residue protein sequence, read N- to C-terminus: Host cell factor C1 regulator 1 (116 aa).

The interval 1–22 is disordered; it reads MILQQPLERGPPGRDPRATTGV. An interaction with HCFC1 region spans residues 54 to 57; it reads DHPY. Residues 88 to 97 carry the Nuclear export signal motif; it reads IPEALRLLRL.

In terms of assembly, interacts with HCFC1.

Its subcellular location is the cytoplasm. The protein localises to the nucleus. Regulates HCFC1 activity by modulating its subcellular localization. Overexpression of HCFC1R1 leads to accumulation of HCFC1 in the cytoplasm. HCFC1R1-mediated export may provide the pool of cytoplasmic HCFC1 required for import of virion-derived VP16 into the nucleus. This chain is Host cell factor C1 regulator 1 (Hcfc1r1), found in Rattus norvegicus (Rat).